Here is a 103-residue protein sequence, read N- to C-terminus: Histone H4 (103 aa).

Gly residues predominate over residues 1 to 14 (MSGRGKGGKGLGKG). Residues 1-20 (MSGRGKGGKGLGKGGAKRHR) form a disordered region. Ser2 is subject to N-acetylserine. N6-acetyl-N6-methyllysine; alternate occurs at positions 6 and 13. N6-acetyllysine is present on Lys17. A DNA-binding region spans residues 17–21 (KRHRK). An N6-methyllysine modification is found at Lys21.

This sequence belongs to the histone H4 family. The nucleosome is a histone octamer containing two molecules each of H2A, H2B, H3 and H4 assembled in one H3-H4 heterotetramer and two H2A-H2B heterodimers. The octamer wraps approximately 147 bp of DNA.

It is found in the nucleus. Its subcellular location is the chromosome. Core component of nucleosome. Nucleosomes wrap and compact DNA into chromatin, limiting DNA accessibility to the cellular machineries which require DNA as a template. Histones thereby play a central role in transcription regulation, DNA repair, DNA replication and chromosomal stability. DNA accessibility is regulated via a complex set of post-translational modifications of histones, also called histone code, and nucleosome remodeling. This is Histone H4 from Ascaris suum (Pig roundworm).